The following is a 476-amino-acid chain: Aspartyl/glutamyl-tRNA(Asn/Gln) amidotransferase subunit B (476 aa).

Belongs to the GatB/GatE family. GatB subfamily. As to quaternary structure, heterotrimer of A, B and C subunits.

It carries out the reaction L-glutamyl-tRNA(Gln) + L-glutamine + ATP + H2O = L-glutaminyl-tRNA(Gln) + L-glutamate + ADP + phosphate + H(+). The catalysed reaction is L-aspartyl-tRNA(Asn) + L-glutamine + ATP + H2O = L-asparaginyl-tRNA(Asn) + L-glutamate + ADP + phosphate + 2 H(+). Functionally, allows the formation of correctly charged Asn-tRNA(Asn) or Gln-tRNA(Gln) through the transamidation of misacylated Asp-tRNA(Asn) or Glu-tRNA(Gln) in organisms which lack either or both of asparaginyl-tRNA or glutaminyl-tRNA synthetases. The reaction takes place in the presence of glutamine and ATP through an activated phospho-Asp-tRNA(Asn) or phospho-Glu-tRNA(Gln). This chain is Aspartyl/glutamyl-tRNA(Asn/Gln) amidotransferase subunit B, found in Listeria innocua serovar 6a (strain ATCC BAA-680 / CLIP 11262).